Reading from the N-terminus, the 215-residue chain is Kunitz trypsin inhibitor 4 (215 aa).

Positions 1–28 (MTKTTKTMNPKFYLVLALTAVLASNAYG) are cleaved as a signal peptide. 2 disulfides stabilise this stretch: Cys66-Cys112 and Cys165-Cys176. N-linked (GlcNAc...) asparagine glycosylation is present at Asn206.

This sequence belongs to the protease inhibitor I3 (leguminous Kunitz-type inhibitor) family. As to expression, expressed in roots.

The protein resides in the endoplasmic reticulum. In terms of biological role, exhibits Kunitz trypsin protease inhibitor activity. Involved in modulating programmed cell death (PCD) in plant-pathogen interactions. Can inhibit both serine proteases and cysteine proteases. May be involved in the modulation of the proteases that participate in the hydrolysis of dietary proteins in the gut of spider mites. The polypeptide is Kunitz trypsin inhibitor 4 (Arabidopsis thaliana (Mouse-ear cress)).